Here is a 32-residue protein sequence, read N- to C-terminus: Acetolactate synthase, catabolic (32 aa).

It belongs to the TPP enzyme family. In terms of assembly, homodimer.

It carries out the reaction 2 pyruvate + H(+) = (2S)-2-acetolactate + CO2. It functions in the pathway polyol metabolism; (R,R)-butane-2,3-diol biosynthesis; (R,R)-butane-2,3-diol from pyruvate: step 1/3. In Klebsiella aerogenes (Enterobacter aerogenes), this protein is Acetolactate synthase, catabolic (budB).